We begin with the raw amino-acid sequence, 561 residues long: Putative transport protein DNO_0009 (561 aa).

The next 5 helical transmembrane spans lie at 4-24 (VAITICILSLVASLGLWLGNI), 29-49 (VGLSIGGVLFGGIIISHIMNL), 74-94 (FGLILFVYTIGIQVGPGFFAS), 104-124 (AFAALIVLLGGLCSVILYYLF), and 166-186 (MGYAIAYPFGIIGVLLAMWLI). RCK C-terminal domains are found at residues 198-283 (LQFF…ILGE) and 285-369 (AGHE…LIGN). The next 6 helical transmembrane spans lie at 379-399 (MLPVFIGIGLGVLLGSIPIYL), 411-433 (AGGPLVVALVLARIGSIGKLYWF), 447-467 (IVLFLSVIGIHAGEHFFSTLL), 472-492 (FSWICYGAIITLLPLLIAGII), 501-521 (YLTICGLLAGAMTDTPALAFA), and 538-558 (VYPLTTFLRIMLPQLIAVLLW).

This sequence belongs to the AAE transporter (TC 2.A.81) family. YidE subfamily.

It localises to the cell membrane. The chain is Putative transport protein DNO_0009 from Dichelobacter nodosus (strain VCS1703A).